We begin with the raw amino-acid sequence, 242 residues long: Venom nerve growth factor 3 (242 aa).

Residues 1–18 (MSMLCYTLIIAFLIGIWA) form the signal peptide. A propeptide spanning residues 19–125 (APKSEDNVPL…ALNRNIRSKR (107 aa)) is cleaved from the precursor. Residues 48–66 (LKTSRNTDQRHPAPKKAED) are compositionally biased toward basic and acidic residues. The disordered stretch occupies residues 48-69 (LKTSRNTDQRHPAPKKAEDQEL). Intrachain disulfides connect Cys-139/Cys-203, Cys-181/Cys-231, and Cys-191/Cys-233. Residue Asn-147 is glycosylated (N-linked (GlcNAc...) asparagine).

Belongs to the NGF-beta family. In terms of assembly, homodimer; non-covalently linked. As to expression, expressed by the venom gland.

It is found in the secreted. Its function is as follows. Nerve growth factor is important for the development and maintenance of the sympathetic and sensory nervous systems. It stimulates division and differentiation of sympathetic and embryonic sensory neurons as well as basal forebrain cholinergic neurons in the brain. Its relevance in the snake venom is not clear. However, it has been shown to inhibit metalloproteinase-dependent proteolysis of platelet glycoprotein Ib alpha, suggesting a metalloproteinase inhibition to prevent metalloprotease autodigestion and/or protection against prey proteases. Binds a lipid between the two protein chains in the homodimer. The lipid-bound form promotes histamine relase from mouse mast cells, contrary to the lipid-free form. The sequence is that of Venom nerve growth factor 3 from Demansia vestigiata (Lesser black whip snake).